Here is a 462-residue protein sequence, read N- to C-terminus: Asparagine--tRNA ligase (462 aa).

This sequence belongs to the class-II aminoacyl-tRNA synthetase family. In terms of assembly, homodimer.

The protein resides in the cytoplasm. It catalyses the reaction tRNA(Asn) + L-asparagine + ATP = L-asparaginyl-tRNA(Asn) + AMP + diphosphate + H(+). This is Asparagine--tRNA ligase from Thermosynechococcus vestitus (strain NIES-2133 / IAM M-273 / BP-1).